Here is a 487-residue protein sequence, read N- to C-terminus: Alpha-1,4-L-rhamnosidase (487 aa).

A signal peptide spans 1 to 30; sequence MKNKKRLCHILKYIITCFLFGVIFIIPIQA. Residue glutamate 199 is the Proton donor of the active site.

It belongs to the glycosyl hydrolase 39 family.

It localises to the periplasm. In terms of biological role, alpha-rhamnosidase involved in ulvan degradation. Ulvan is the main polysaccharide component of the Ulvales (green seaweed) cell wall. It is composed of disaccharide building blocks comprising 3-sulfated rhamnose (Rha3S) linked to D-glucuronic acid (GlcA), L-iduronic acid (IduA), or D-xylose (Xyl). Endo-acting alpha-1,4-L-rhamnosidase cleaves rhamnose sections interspersed between xylose residues within the polymer, degrading larger oligomers with consecutive Xyl-Rha3S units that are resistant to the ulvan lyases and producing dimers Xyl-Rha3S and Xyl2S-Rha3S as the smallest products. This Formosa agariphila (strain DSM 15362 / KCTC 12365 / LMG 23005 / KMM 3901 / M-2Alg 35-1) protein is Alpha-1,4-L-rhamnosidase.